A 449-amino-acid chain; its full sequence is MGGPKIKYSFLFLCITFATIIPSLMAHIGHYDEVWRRRAEEAKEYARNIYEPHPENVTLAFNQKLRDTMKELKKVKGTHNNSTRRGLGTKKYTGPCMVTNPIDKCWRCDPNWADNRKKLADCAMGFGSKAIGGKDGEFYVVTDNSDDYNDPKPGTLRHAVIQKEPLWIIFKRGMNIRLHQEMIMQSDKTIDARGVNVHITKGAGITLQYIKNVIIHGLHIHDIVEGNGGMVRDAVDHIGIRTKSDGDGISIFGASYIWIDHVSMQRCYDGLIDAVEGSTGITISNGHFTDHNEVMLFGASDSSSIDQVMQITLAFNHFGKRLIQRMPRCRWGYIHVVNNDYTHWNMYAIGGSMHPTIIHQGNRFIAPPDIFKKQVTKREYNPESVWMQWTWRSEGNLFMNGAYFTESGDPEWSSKHKDLYDGISAAPAEDVTWMTRFAGVLGCKPGKPC.

The first 22 residues, 1-22 (MGGPKIKYSFLFLCITFATIIP), serve as a signal peptide directing secretion. Residues N56, N80, and N81 are each glycosylated (N-linked (GlcNAc...) asparagine). 3 residues coordinate Ca(2+): D245, D269, and D273. The active site involves R325.

The protein belongs to the polysaccharide lyase 1 family. Ca(2+) is required as a cofactor. Expressed in anthers and pollen.

The catalysed reaction is Eliminative cleavage of (1-&gt;4)-alpha-D-galacturonan to give oligosaccharides with 4-deoxy-alpha-D-galact-4-enuronosyl groups at their non-reducing ends.. The protein operates within glycan metabolism; pectin degradation; 2-dehydro-3-deoxy-D-gluconate from pectin: step 2/5. Its function is as follows. Might be needed during pollen development and tube growth. The sequence is that of Probable pectate lyase P59 (LAT59) from Solanum lycopersicum (Tomato).